The sequence spans 193 residues: Potassium-transporting ATPase KdpC subunit (193 aa).

A helical transmembrane segment spans residues 7–27; the sequence is PLVVIFAVLTVVTGMAYPAVM.

The protein belongs to the KdpC family. The system is composed of three essential subunits: KdpA, KdpB and KdpC.

The protein resides in the cell inner membrane. Part of the high-affinity ATP-driven potassium transport (or Kdp) system, which catalyzes the hydrolysis of ATP coupled with the electrogenic transport of potassium into the cytoplasm. This subunit acts as a catalytic chaperone that increases the ATP-binding affinity of the ATP-hydrolyzing subunit KdpB by the formation of a transient KdpB/KdpC/ATP ternary complex. The chain is Potassium-transporting ATPase KdpC subunit from Burkholderia vietnamiensis (strain G4 / LMG 22486) (Burkholderia cepacia (strain R1808)).